A 438-amino-acid chain; its full sequence is Fumarate hydratase class II (438 aa).

Residues 76–78 (SGT), 101–104 (HPND), 111–113 (SSN), and threonine 159 contribute to the substrate site. Catalysis depends on histidine 160, which acts as the Proton donor/acceptor. The active site involves serine 291. Residues serine 292 and 297–299 (KTN) contribute to the substrate site.

It belongs to the class-II fumarase/aspartase family. Fumarase subfamily. Homotetramer.

The protein resides in the cytoplasm. It carries out the reaction (S)-malate = fumarate + H2O. The protein operates within carbohydrate metabolism; tricarboxylic acid cycle; (S)-malate from fumarate: step 1/1. Involved in the TCA cycle. Catalyzes the stereospecific interconversion of fumarate to L-malate. The polypeptide is Fumarate hydratase class II (Saccharolobus solfataricus (strain ATCC 35092 / DSM 1617 / JCM 11322 / P2) (Sulfolobus solfataricus)).